Consider the following 220-residue polypeptide: Protein-methionine-sulfoxide reductase heme-binding subunit MsrQ (220 aa).

Transmembrane regions (helical) follow at residues 20–40, 51–71, 86–106, 122–142, 153–173, and 175–195; these read LWLL…LGAT, FEHL…LVTP, ALGL…MVLD, PFIT…LTSN, WSSL…HFLM, and VKSW…LLLW.

It belongs to the MsrQ family. Heterodimer of a catalytic subunit (MsrP) and a heme-binding subunit (MsrQ). FMN is required as a cofactor. It depends on heme b as a cofactor.

The protein resides in the cell inner membrane. In terms of biological role, part of the MsrPQ system that repairs oxidized periplasmic proteins containing methionine sulfoxide residues (Met-O), using respiratory chain electrons. Thus protects these proteins from oxidative-stress damage caused by reactive species of oxygen and chlorine generated by the host defense mechanisms. MsrPQ is essential for the maintenance of envelope integrity under bleach stress, rescuing a wide series of structurally unrelated periplasmic proteins from methionine oxidation. MsrQ provides electrons for reduction to the reductase catalytic subunit MsrP, using the quinone pool of the respiratory chain. The protein is Protein-methionine-sulfoxide reductase heme-binding subunit MsrQ of Brucella melitensis biotype 2 (strain ATCC 23457).